A 159-amino-acid polypeptide reads, in one-letter code: Ribosomal RNA large subunit methyltransferase H (159 aa).

Residues leucine 76, glycine 108, and 127-132 contribute to the S-adenosyl-L-methionine site; that span reads FSKMTF.

Belongs to the RNA methyltransferase RlmH family. Homodimer.

The protein resides in the cytoplasm. The enzyme catalyses pseudouridine(1915) in 23S rRNA + S-adenosyl-L-methionine = N(3)-methylpseudouridine(1915) in 23S rRNA + S-adenosyl-L-homocysteine + H(+). Its function is as follows. Specifically methylates the pseudouridine at position 1915 (m3Psi1915) in 23S rRNA. This is Ribosomal RNA large subunit methyltransferase H from Staphylococcus haemolyticus (strain JCSC1435).